Reading from the N-terminus, the 660-residue chain is Bifunctional polymyxin resistance protein ArnA (660 aa).

The formyltransferase ArnAFT stretch occupies residues 1-304 (MKTVVFAYHD…TLGLVQGSRL (304 aa)). 86 to 88 (HLI) lines the (6R)-10-formyltetrahydrofolate pocket. The active-site Proton donor; for formyltransferase activity is the His-104. (6R)-10-formyltetrahydrofolate is bound by residues Arg-114 and 136-140 (VKRAD). The tract at residues 314 to 660 (RRTRVLILGV…RTVDLTDKPS (347 aa)) is dehydrogenase ArnADH. NAD(+) is bound by residues Asp-347 and 368 to 369 (DI). UDP-alpha-D-glucuronate-binding positions include Ala-393, Tyr-398, and 432-433 (TS). Residue Glu-434 is the Proton acceptor; for decarboxylase activity of the active site. UDP-alpha-D-glucuronate contacts are provided by residues Arg-460, Asn-492, 526–535 (KLIDGGKQKR), and Tyr-613. The Proton donor; for decarboxylase activity role is filled by Arg-619.

In the N-terminal section; belongs to the Fmt family. UDP-L-Ara4N formyltransferase subfamily. This sequence in the C-terminal section; belongs to the NAD(P)-dependent epimerase/dehydratase family. UDP-glucuronic acid decarboxylase subfamily. In terms of assembly, homohexamer, formed by a dimer of trimers.

The enzyme catalyses UDP-alpha-D-glucuronate + NAD(+) = UDP-beta-L-threo-pentopyranos-4-ulose + CO2 + NADH. The catalysed reaction is UDP-4-amino-4-deoxy-beta-L-arabinose + (6R)-10-formyltetrahydrofolate = UDP-4-deoxy-4-formamido-beta-L-arabinose + (6S)-5,6,7,8-tetrahydrofolate + H(+). The protein operates within nucleotide-sugar biosynthesis; UDP-4-deoxy-4-formamido-beta-L-arabinose biosynthesis; UDP-4-deoxy-4-formamido-beta-L-arabinose from UDP-alpha-D-glucuronate: step 1/3. It functions in the pathway nucleotide-sugar biosynthesis; UDP-4-deoxy-4-formamido-beta-L-arabinose biosynthesis; UDP-4-deoxy-4-formamido-beta-L-arabinose from UDP-alpha-D-glucuronate: step 3/3. It participates in bacterial outer membrane biogenesis; lipopolysaccharide biosynthesis. Its function is as follows. Bifunctional enzyme that catalyzes the oxidative decarboxylation of UDP-glucuronic acid (UDP-GlcUA) to UDP-4-keto-arabinose (UDP-Ara4O) and the addition of a formyl group to UDP-4-amino-4-deoxy-L-arabinose (UDP-L-Ara4N) to form UDP-L-4-formamido-arabinose (UDP-L-Ara4FN). The modified arabinose is attached to lipid A and is required for resistance to polymyxin and cationic antimicrobial peptides. This is Bifunctional polymyxin resistance protein ArnA from Escherichia coli O9:H4 (strain HS).